A 98-amino-acid polypeptide reads, in one-letter code: Cell cycle protein GpsB (98 aa).

Residues 34 to 71 (LDIVIKDYEAFQQELDELRQENARLKRQVEELQKRPTT) adopt a coiled-coil conformation.

Belongs to the GpsB family. In terms of assembly, forms polymers through the coiled coil domains. Interacts with PBP1, MreC and EzrA.

The protein localises to the cytoplasm. Its function is as follows. Divisome component that associates with the complex late in its assembly, after the Z-ring is formed, and is dependent on DivIC and PBP2B for its recruitment to the divisome. Together with EzrA, is a key component of the system that regulates PBP1 localization during cell cycle progression. Its main role could be the removal of PBP1 from the cell pole after pole maturation is completed. Also contributes to the recruitment of PBP1 to the division complex. Not essential for septum formation. This is Cell cycle protein GpsB from Geobacillus thermodenitrificans (strain NG80-2).